We begin with the raw amino-acid sequence, 702 residues long: Flagellar operon control protein UmoB (702 aa).

A run of 5 helical transmembrane segments spans residues 4–24 (SVIILAIFMISLFIMAAFLFF), 204–224 (GFWNGSLICLGLILWLTALMM), 227–247 (VFLPWIMAAGGTFLVLGLFLI), 343–363 (IIFVVCSLFIIGMLYLYQPLS), and 656–676 (GNTLLLFFAIGFLILNLFFII).

The protein belongs to the IgaA family.

It localises to the cell inner membrane. In terms of biological role, up-regulator of flagellar flhDC master operon. The polypeptide is Flagellar operon control protein UmoB (umoB) (Proteus mirabilis).